We begin with the raw amino-acid sequence, 418 residues long: Tubulin alpha chain (418 aa).

GTP is bound by residues Q11, E71, S140, G144, T179, N206, and N228. E71 serves as a coordination point for Mg(2+). The active site involves E255.

This sequence belongs to the tubulin family. In terms of assembly, dimer of alpha and beta chains. A typical microtubule is a hollow water-filled tube with an outer diameter of 25 nm and an inner diameter of 15 nM. Alpha-beta heterodimers associate head-to-tail to form protofilaments running lengthwise along the microtubule wall with the beta-tubulin subunit facing the microtubule plus end conferring a structural polarity. Microtubules usually have 13 protofilaments but different protofilament numbers can be found in some organisms and specialized cells. Mg(2+) serves as cofactor.

Its subcellular location is the cytoplasm. It localises to the cytoskeleton. The catalysed reaction is GTP + H2O = GDP + phosphate + H(+). Functionally, tubulin is the major constituent of microtubules, a cylinder consisting of laterally associated linear protofilaments composed of alpha- and beta-tubulin heterodimers. Microtubules grow by the addition of GTP-tubulin dimers to the microtubule end, where a stabilizing cap forms. Below the cap, tubulin dimers are in GDP-bound state, owing to GTPase activity of alpha-tubulin. This is Tubulin alpha chain (TUB1) from Ajellomyces capsulatus (Darling's disease fungus).